The chain runs to 92 residues: Small ribosomal subunit protein uS19c (92 aa).

This sequence belongs to the universal ribosomal protein uS19 family.

Its subcellular location is the plastid. The protein localises to the chloroplast. Its function is as follows. Protein S19 forms a complex with S13 that binds strongly to the 16S ribosomal RNA. This chain is Small ribosomal subunit protein uS19c (rps19), found in Chlorella vulgaris (Green alga).